The primary structure comprises 1049 residues: Presequence protease, mitochondrial (1049 aa).

Residues 1–39 constitute a mitochondrion transit peptide; it reads MLRSYLHLGRHRTPAFRQPLGRLLRPTASILQYAQSRTL. His-113 is a Zn(2+) binding site. Catalysis depends on Glu-116, which acts as the Proton acceptor. His-117 is a Zn(2+) binding site. Residue Glu-189 is part of the active site. Glu-222 lines the Zn(2+) pocket.

It belongs to the peptidase M16 family. PreP subfamily. Monomer and homodimer; homodimerization is induced by binding of the substrate. Zn(2+) serves as cofactor.

It localises to the mitochondrion intermembrane space. Its subcellular location is the mitochondrion matrix. Functionally, degrades mitochondrial transit peptides after their cleavage in the intermembrane space or in the matrix, and presequence peptides; clearance of these peptides is required to keep the presequence processing machinery running. Preferentially cleaves the N-terminal side of paired basic amino acid residues. Also degrades other unstructured peptides. May function as an ATP-dependent peptidase as opposed to a metalloendopeptidase. The protein is Presequence protease, mitochondrial (cym1) of Emericella nidulans (strain FGSC A4 / ATCC 38163 / CBS 112.46 / NRRL 194 / M139) (Aspergillus nidulans).